A 128-amino-acid polypeptide reads, in one-letter code: Ribosome-binding factor A (128 aa).

It belongs to the RbfA family. Monomer. Binds 30S ribosomal subunits, but not 50S ribosomal subunits or 70S ribosomes.

The protein localises to the cytoplasm. Functionally, one of several proteins that assist in the late maturation steps of the functional core of the 30S ribosomal subunit. Associates with free 30S ribosomal subunits (but not with 30S subunits that are part of 70S ribosomes or polysomes). Required for efficient processing of 16S rRNA. May interact with the 5'-terminal helix region of 16S rRNA. The chain is Ribosome-binding factor A from Idiomarina loihiensis (strain ATCC BAA-735 / DSM 15497 / L2-TR).